Reading from the N-terminus, the 595-residue chain is Parathyroid hormone/parathyroid hormone-related peptide receptor (595 aa).

The N-terminal stretch at 1 to 28 (MGAVRIAPGLALLLCCPVLSSAYALVDA) is a signal peptide. Residues 29–188 (DDVMTKEEQI…REREVFDRLG (160 aa)) lie on the Extracellular side of the membrane. 3 disulfide bridges follow: C48/C117, C108/C148, and C131/C170. Residues 66–103 (DKGWASASTSGKPKKEKASGKLYPESEEDKEVPTGSRH) form a disordered region. N151, N161, N166, and N176 each carry an N-linked (GlcNAc...) asparagine glycan. Residues 189–209 (MIYTVGYSVSLASLTVAVLIL) traverse the membrane as a helical segment. Topologically, residues 210–223 (AYFRRLHCTRNYIH) are cytoplasmic. The chain crosses the membrane as a helical span at residues 224-244 (MHLFLSFMLRAVSIFVKDAVL). The Extracellular segment spans residues 245 to 294 (YSGATLDEAERLTEEELRAIAQAPPPPTAAAGYAGCRVAVTFFLYFLATN). The helical transmembrane segment at 295–315 (YYWILVEGLYLHSLIFMAFFS) threads the bilayer. The Cytoplasmic segment spans residues 316–318 (EKK). Residues 319–339 (YLWGFTVFGWGLPAVFVAVWV) form a helical membrane-spanning segment. The Extracellular segment spans residues 340–360 (SVRATLANTGCWDLSSGNKKW). The chain crosses the membrane as a helical span at residues 361–381 (IIQVPILASIVLNFILFINIV). The Cytoplasmic portion of the chain corresponds to 382 to 404 (RVLATKLRETNAGRCDTRQQYRK). A helical membrane pass occupies residues 405-425 (LLKSTLVLMPLFGVHYIVFMA). The Extracellular portion of the chain corresponds to 426–439 (TPYTEVSGTLWQVQ). Residues 440–460 (MHYEMLFNSFQGFFVAIIYCF) form a helical membrane-spanning segment. The Cytoplasmic portion of the chain corresponds to 461-595 (CNGEVQAEIK…LLQEEWETVM (135 aa)). The Important for interaction with G proteins motif lies at 473–476 (WSRW). The tract at residues 528–595 (TTTATTNGHP…LLQEEWETVM (68 aa)) is disordered. Low complexity predominate over residues 547-559 (APTLPATPPATAA). T553 bears the Phosphothreonine mark.

The protein belongs to the G-protein coupled receptor 2 family. In terms of assembly, homodimer in the absence of bound ligand. Peptide hormone binding leads to dissociation of the homodimer. N-glycosylated. High levels in the kidney, with much lower levels in aorta, heart, lung, prostate, testis, and skeletal muscle.

Its subcellular location is the cell membrane. In terms of biological role, G-protein-coupled receptor for parathyroid hormone (PTH) and for parathyroid hormone-related peptide (PTHLH). Ligand binding causes a conformation change that triggers signaling via guanine nucleotide-binding proteins (G proteins) and modulates the activity of downstream effectors, such as adenylate cyclase (cAMP). PTH1R is coupled to G(s) G alpha proteins and mediates activation of adenylate cyclase activity. PTHLH dissociates from PTH1R more rapidly than PTH; as consequence, the cAMP response induced by PTHLH decays faster than the response induced by PTH. The sequence is that of Parathyroid hormone/parathyroid hormone-related peptide receptor (PTH1R) from Canis lupus familiaris (Dog).